Reading from the N-terminus, the 673-residue chain is MVWLMEALKTKENETTKEKKLTTKVEKSEKKEENVREEEIVCPICGSKEVVKDYERAEIVCAKCGCVIKEKLFDIGPEWRAFDHEQKIKRCRVGAPMTYSVDYNEPIIIKENGEIKVVKIGELIDKIIENSENIRREGILEIAKCKGIEVIAFNSNYKFKFMPVSEVSRHPVSEMFEIVVEGNKKVRVTRSHSVFTIRDNEVVPIRVDELKVGDILVLAKELPNIEEDIEIDKKFSKILGYIIAEGYYDDKKIVLSYDYNEKEFINETIDYFKSLNSDITIYSKDLNIQIEVKNKKIINLLKKLRVKNKRIPSIIFKSPYEIKKSFIDGIFNGKDAKVFVSKELAEDVIFLLLQIKENATINKKSINDIEVYEVRRITNIYTNRKLEKLINSDFIFLKIKEINKVEPTSGYAYDLTVPNAENFVAGFGGFVLHNTIHDKGLSTVIDWRNKDSYGKDLSANKRAQLYRLRKWQRRIRVSDAAERNLAFALSELDRITSKLGLPRHVRENAAIIYRGAVEKGLIRGRSIEGVVAAAIYAACRRCRVPRTLDEIAEASRVDRKEIGRTYRFLARELNIKLTPTNPIDYVPRFASELGLPGEVESKAIQILQQAAEKGLTSGRGPTGVAAAAIYIASVLLGCRRTQREVAEVAGVTEVTIRNRYKELTEHLDIDVTL.

A TFIIB-type zinc finger spans residues 38 to 69 (EEIVCPICGSKEVVKDYERAEIVCAKCGCVIK). C42, C45, C61, and C64 together coordinate Zn(2+). The DOD-type homing endonuclease domain maps to 238 to 357 (ILGYIIAEGY…VIFLLLQIKE (120 aa)). 2 repeat units span residues 490–573 (SELD…AREL) and 584–665 (DYVP…ELTE).

This sequence belongs to the TFIIB family. In terms of processing, this protein undergoes a protein self splicing that involves a post-translational excision of the intervening region (intein) followed by peptide ligation.

Its function is as follows. Stabilizes TBP binding to an archaeal box-A promoter. Also responsible for recruiting RNA polymerase II to the pre-initiation complex (DNA-TBP-TFIIB). This is Transcription initiation factor IIB (tfb) from Methanocaldococcus jannaschii (strain ATCC 43067 / DSM 2661 / JAL-1 / JCM 10045 / NBRC 100440) (Methanococcus jannaschii).